Consider the following 176-residue polypeptide: Large ribosomal subunit protein uL16 (176 aa).

The protein belongs to the universal ribosomal protein uL16 family.

The chain is Large ribosomal subunit protein uL16 from Sulfolobus acidocaldarius (strain ATCC 33909 / DSM 639 / JCM 8929 / NBRC 15157 / NCIMB 11770).